Consider the following 697-residue polypeptide: Ion-translocating oxidoreductase complex subunit C (697 aa).

4Fe-4S ferredoxin-type domains are found at residues 366 to 397 (AEMGLSEPEQSCIRCGLCVDACPAGLLPQQLY) and 407 to 436 (KARNHNLFDCIECGACAYVCPSNIPLVQYY). Cys-377, Cys-380, Cys-383, Cys-387, Cys-416, Cys-419, Cys-422, and Cys-426 together coordinate [4Fe-4S] cluster. The segment at 576-674 (AQLESEPVKS…APEEDPRKAA (99 aa)) is disordered. A compositionally biased stretch (basic and acidic residues) spans 581-596 (EPVKSESEAPEEDPRK). The span at 597–615 (AAVAAAIARVKAKKAAQAQ) shows a compositional bias: low complexity. The span at 619–634 (EPVKSESEAPEEDPRK) shows a compositional bias: basic and acidic residues. Low complexity predominate over residues 635–653 (AAVAAAIARVKAKKAAQAQ). The segment covering 657 to 672 (EPVKSESEAPEEDPRK) has biased composition (basic and acidic residues).

This sequence belongs to the 4Fe4S bacterial-type ferredoxin family. RnfC subfamily. As to quaternary structure, the complex is composed of six subunits: RnfA, RnfB, RnfC, RnfD, RnfE and RnfG. The cofactor is [4Fe-4S] cluster.

It is found in the cell inner membrane. Part of a membrane-bound complex that couples electron transfer with translocation of ions across the membrane. This is Ion-translocating oxidoreductase complex subunit C from Yersinia enterocolitica serotype O:8 / biotype 1B (strain NCTC 13174 / 8081).